Consider the following 411-residue polypeptide: Elongation factor Tu, apicoplast (411 aa).

Residues 10-214 (KPHVNIGTIG…TVDSYIEKPE (205 aa)) enclose the tr-type G domain. Residues 19–26 (GHVDHGKT) are G1. 19–26 (GHVDHGKT) contributes to the GTP binding site. Residue Thr26 participates in Mg(2+) binding. Residues 61–65 (GITIN) form a G2 region. The interval 82 to 85 (DCPG) is G3. Residues 82–86 (DCPGH) and 137–140 (NKED) contribute to the GTP site. The G4 stretch occupies residues 137-140 (NKED). Positions 175–177 (SAL) are G5.

Belongs to the TRAFAC class translation factor GTPase superfamily. Classic translation factor GTPase family. EF-Tu/EF-1A subfamily.

The protein resides in the plastid. The protein localises to the apicoplast. The catalysed reaction is GTP + H2O = GDP + phosphate + H(+). Its function is as follows. GTP hydrolase that promotes the GTP-dependent binding of aminoacyl-tRNA to the A-site of ribosomes during protein biosynthesis. The chain is Elongation factor Tu, apicoplast (tufA) from Theileria parva (East coast fever infection agent).